The following is an 89-amino-acid chain: Signal recognition particle 19 kDa protein (89 aa).

Belongs to the SRP19 family. In terms of assembly, part of the signal recognition particle protein translocation system, which is composed of SRP and FtsY. Archaeal SRP consists of a 7S RNA molecule of 300 nucleotides and two protein subunits: SRP54 and SRP19.

It is found in the cytoplasm. Its function is as follows. Involved in targeting and insertion of nascent membrane proteins into the cytoplasmic membrane. Binds directly to 7S RNA and mediates binding of the 54 kDa subunit of the SRP. In Methanococcus vannielii (strain ATCC 35089 / DSM 1224 / JCM 13029 / OCM 148 / SB), this protein is Signal recognition particle 19 kDa protein.